A 537-amino-acid chain; its full sequence is Arginine--tRNA ligase (537 aa).

The 'HIGH' region motif lies at 113–123 (ANPTGELHLGH).

This sequence belongs to the class-I aminoacyl-tRNA synthetase family. Monomer.

Its subcellular location is the cytoplasm. It carries out the reaction tRNA(Arg) + L-arginine + ATP = L-arginyl-tRNA(Arg) + AMP + diphosphate. This chain is Arginine--tRNA ligase (argS), found in Mycoplasma pneumoniae (strain ATCC 29342 / M129 / Subtype 1) (Mycoplasmoides pneumoniae).